Consider the following 73-residue polypeptide: Large ribosomal subunit protein bL31 (73 aa).

Zn(2+)-binding residues include C16, C18, C37, and C40.

This sequence belongs to the bacterial ribosomal protein bL31 family. Type A subfamily. In terms of assembly, part of the 50S ribosomal subunit. Zn(2+) serves as cofactor.

Its function is as follows. Binds the 23S rRNA. This chain is Large ribosomal subunit protein bL31, found in Pseudomonas syringae pv. syringae (strain B728a).